A 200-amino-acid chain; its full sequence is NAD(P)H dehydrogenase (quinone) (200 aa).

The Flavodoxin-like domain maps to 4–191 (VLVLYYSSYG…DIARYQGKHV (188 aa)). FMN-binding positions include 10 to 15 (SSYGHV) and 79 to 81 (TRF). Y12 contributes to the NAD(+) binding site. Substrate is bound at residue W99. FMN-binding positions include 114-120 (STGTQHG) and H135.

Belongs to the WrbA family. The cofactor is FMN.

The catalysed reaction is a quinone + NADH + H(+) = a quinol + NAD(+). It catalyses the reaction a quinone + NADPH + H(+) = a quinol + NADP(+). This chain is NAD(P)H dehydrogenase (quinone), found in Burkholderia multivorans (strain ATCC 17616 / 249).